An 89-amino-acid polypeptide reads, in one-letter code: Small ribosomal subunit protein eS25A (89 aa).

It belongs to the eukaryotic ribosomal protein eS25 family. Component of the small ribosomal subunit (SSU). Mature yeast ribosomes consist of a small (40S) and a large (60S) subunit. The 40S small subunit contains 1 molecule of ribosomal RNA (18S rRNA) and at least 33 different proteins. The large 60S subunit contains 3 rRNA molecules (25S, 5.8S and 5S rRNA) and at least 46 different proteins.

The protein localises to the cytoplasm. In terms of biological role, component of the ribosome, a large ribonucleoprotein complex responsible for the synthesis of proteins in the cell. The small ribosomal subunit (SSU) binds messenger RNAs (mRNAs) and translates the encoded message by selecting cognate aminoacyl-transfer RNA (tRNA) molecules. The large subunit (LSU) contains the ribosomal catalytic site termed the peptidyl transferase center (PTC), which catalyzes the formation of peptide bonds, thereby polymerizing the amino acids delivered by tRNAs into a polypeptide chain. The nascent polypeptides leave the ribosome through a tunnel in the LSU and interact with protein factors that function in enzymatic processing, targeting, and the membrane insertion of nascent chains at the exit of the ribosomal tunnel. In Schizosaccharomyces pombe (strain 972 / ATCC 24843) (Fission yeast), this protein is Small ribosomal subunit protein eS25A (rps2502).